The chain runs to 192 residues: MADRALNLDDFLSRFQLLRPQPSRHALNQRQAAVLVPIVRRPQPGLLLTQRSPLLRKHAGQVAFPGGAVDNTDATLIAAALREAQEEVAIPPEAVEVIGVLPPVDSVTGFQVTPVVGIIPPDLHYHASQDEVSAVFEMPLAEALRLGRYHPLDIHRRGNDHRVWLSWYQHYFVWGMTAGIIRELALQIGARP.

Residues 29 to 160 form the Nudix hydrolase domain; sequence QRQAAVLVPI…PLDIHRRGND (132 aa). Positions 67–89 match the Nudix box motif; the sequence is GAVDNTDATLIAAALREAQEEVA. The Mg(2+) site is built by glutamate 83 and glutamate 87.

This sequence belongs to the Nudix hydrolase family. PCD1 subfamily. The cofactor is Mn(2+). Requires Mg(2+) as cofactor.

In terms of biological role, probably mediates the hydrolysis of some nucleoside diphosphate derivatives. This is an uncharacterized protein from Klebsiella pneumoniae subsp. pneumoniae (strain ATCC 700721 / MGH 78578).